The following is a 179-amino-acid chain: Large ribosomal subunit protein uL6 (179 aa).

Belongs to the universal ribosomal protein uL6 family. Part of the 50S ribosomal subunit.

In terms of biological role, this protein binds to the 23S rRNA, and is important in its secondary structure. It is located near the subunit interface in the base of the L7/L12 stalk, and near the tRNA binding site of the peptidyltransferase center. The chain is Large ribosomal subunit protein uL6 from Desulfovibrio desulfuricans (strain ATCC 27774 / DSM 6949 / MB).